Reading from the N-terminus, the 333-residue chain is Transmembrane protein I329L (333 aa).

A signal peptide spans 1 to 31 (MLRVFIFFVFLGSGLTGRIKPQITCKYFISE). N32, N39, N44, N76, N82, and N101 each carry an N-linked (GlcNAc...) asparagine; by host glycan. At 32 to 239 (NNTWYKYNVT…NTERYKSCYP (208 aa)) the chain is on the extracellular side. Residues 112-133 (ELKFLDLRYNDLQVIEYNILRK) form an LRR repeat. N-linked (GlcNAc...) asparagine; by host glycosylation is found at N181, N185, and N219. The cysteines at positions 195 and 237 are disulfide-linked. A helical transmembrane segment spans residues 240-260 (LVFISILCSCISFLFLFICLL). At 261–333 (RSICKKYSCT…EKKVSCSRRK (73 aa)) the chain is on the cytoplasmic side.

This sequence belongs to the asfivirus I329L family. Post-translationally, highly glycosylated.

Its subcellular location is the host endoplasmic reticulum membrane. It is found in the host Golgi apparatus membrane. Functionally, viral TLR3 homolog that probably prevents TLR3 dimerization and subsequent induction of IFN. Inhibits dsRNA-stimulated activation of NF-kB and IRF3. The protein is Transmembrane protein I329L of Ornithodoros (relapsing fever ticks).